A 404-amino-acid polypeptide reads, in one-letter code: Cysteine desulfurase IscS (404 aa).

Residues 75-76, Asn155, Gln183, and 203-205 each bind pyridoxal 5'-phosphate; these read AT and SAH. Residue Lys206 is modified to N6-(pyridoxal phosphate)lysine. Thr243 contacts pyridoxal 5'-phosphate. Catalysis depends on Cys328, which acts as the Cysteine persulfide intermediate. Residue Cys328 participates in [2Fe-2S] cluster binding.

The protein belongs to the class-V pyridoxal-phosphate-dependent aminotransferase family. NifS/IscS subfamily. Homodimer. Forms a heterotetramer with IscU, interacts with other sulfur acceptors. Pyridoxal 5'-phosphate is required as a cofactor.

It is found in the cytoplasm. It catalyses the reaction (sulfur carrier)-H + L-cysteine = (sulfur carrier)-SH + L-alanine. Its pathway is cofactor biosynthesis; iron-sulfur cluster biosynthesis. Master enzyme that delivers sulfur to a number of partners involved in Fe-S cluster assembly, tRNA modification or cofactor biosynthesis. Catalyzes the removal of elemental sulfur atoms from cysteine to produce alanine. Functions as a sulfur delivery protein for Fe-S cluster synthesis onto IscU, an Fe-S scaffold assembly protein, as well as other S acceptor proteins. The sequence is that of Cysteine desulfurase IscS from Neisseria meningitidis serogroup C (strain 053442).